The primary structure comprises 420 residues: Glutamyl-tRNA reductase (420 aa).

Substrate contacts are provided by residues 49 to 52 (TCNR), S107, 112 to 114 (EPQ), and Q118. The active-site Nucleophile is the C50. Position 187-192 (187-192 (GAGETI)) interacts with NADP(+).

This sequence belongs to the glutamyl-tRNA reductase family. In terms of assembly, homodimer.

It carries out the reaction (S)-4-amino-5-oxopentanoate + tRNA(Glu) + NADP(+) = L-glutamyl-tRNA(Glu) + NADPH + H(+). It functions in the pathway porphyrin-containing compound metabolism; protoporphyrin-IX biosynthesis; 5-aminolevulinate from L-glutamyl-tRNA(Glu): step 1/2. Its function is as follows. Catalyzes the NADPH-dependent reduction of glutamyl-tRNA(Glu) to glutamate 1-semialdehyde (GSA). This Photobacterium profundum (strain SS9) protein is Glutamyl-tRNA reductase.